The chain runs to 353 residues: Mannonate dehydratase (353 aa).

This sequence belongs to the mannonate dehydratase family. It depends on Fe(2+) as a cofactor. Requires Mn(2+) as cofactor.

The enzyme catalyses D-mannonate = 2-dehydro-3-deoxy-D-gluconate + H2O. It participates in carbohydrate metabolism; pentose and glucuronate interconversion. Its function is as follows. Catalyzes the dehydration of D-mannonate. The polypeptide is Mannonate dehydratase (Burkholderia cenocepacia (strain ATCC BAA-245 / DSM 16553 / LMG 16656 / NCTC 13227 / J2315 / CF5610) (Burkholderia cepacia (strain J2315))).